The primary structure comprises 228 residues: Cytidylate kinase (228 aa).

10-18 (GPSGSGKGT) lines the ATP pocket.

Belongs to the cytidylate kinase family. Type 1 subfamily.

Its subcellular location is the cytoplasm. The catalysed reaction is CMP + ATP = CDP + ADP. It carries out the reaction dCMP + ATP = dCDP + ADP. The chain is Cytidylate kinase from Acinetobacter baumannii (strain ACICU).